A 370-amino-acid polypeptide reads, in one-letter code: MVRSGKKAVVLAAVAFCATSVVQKSHGFVPSPLRQRAAAAGAAAASAATMFAPAAFADEIGDAAKKLGDASYAFAKEVDWNNGIFLQAPGKLQPLEALKAIDKMIVMGAAADPKLLKAAAEAHHKAIGSVSGPNGVTSRADWDNVNAALGRVIASVPENMVMDVYDSVSKITDPKVPAYMKSLVSGADAEKAYEGFLAFKDVVKKSQVTSAAGPATVPSGDKIGVAAQQLSEASYPFLKEIDWLSDVYMKPLPGVSAQQSLKAIDKMIVMGAQADGNALKAAAEAHHKAIGSIDATGVTSAADYAAVNAALGRVIASVPKSTVMDVYNAMAGATDTSIPLNMFSKVNPLDANAAAKAFYTFKDVVQAAQR.

The N-terminal 57 residues, 1–57, are a transit peptide targeting the chloroplast; sequence MVRSGKKAVVLAAVAFCATSVVQKSHGFVPSPLRQRAAAAGAAAASAATMFAPAAFA. 2 repeat units span residues 58–220 and 221–370.

As to quaternary structure, homotrimer.

Its subcellular location is the plastid. It is found in the chloroplast. In terms of biological role, water-soluble antenna for capture of solar energy in the blue-green range. Peridinin is an asymmetric carotenoid. In Amphidinium carterae (Dinoflagellate), this protein is Peridinin-chlorophyll a-binding protein 1, chloroplastic.